The sequence spans 257 residues: Phosphonates import ATP-binding protein PhnC 1 (257 aa).

The ABC transporter domain maps to 2-246; the sequence is LKITNLTKRY…EMDTIYAGVP (245 aa). 35-42 contacts ATP; it reads GSSGAGKS.

It belongs to the ABC transporter superfamily. Phosphonates importer (TC 3.A.1.9.1) family. As to quaternary structure, the complex is composed of two ATP-binding proteins (PhnC), two transmembrane proteins (PhnE) and a solute-binding protein (PhnD).

The protein localises to the cell inner membrane. It carries out the reaction phosphonate(out) + ATP + H2O = phosphonate(in) + ADP + phosphate + H(+). In terms of biological role, part of the ABC transporter complex PhnCDE involved in phosphonates import. Responsible for energy coupling to the transport system. This Ruegeria sp. (strain TM1040) (Silicibacter sp.) protein is Phosphonates import ATP-binding protein PhnC 1.